The primary structure comprises 629 residues: Protein SPT2 homolog (629 aa).

Positions Met1–Ser522 are important for interaction with DNA. Residues Gln45–Lys72 adopt a coiled-coil conformation. A compositionally biased stretch (basic and acidic residues) spans Val53 to Phe93. 3 disordered regions span residues Val53–Ser181, Lys206–Tyr533, and Glu608–Lys629. A compositionally biased stretch (polar residues) spans Lys111–Lys123. Over residues Gly127–Ser144 the composition is skewed to acidic residues. Residues Val203 to Lys228 adopt a coiled-coil conformation. Basic and acidic residues-rich tracts occupy residues Lys206 to Arg247 and Lys257 to Gln277. Polar residues-rich tracts occupy residues Ser278–Ser297, Ser305–Ala327, Ser335–Asp345, Val353–Gly364, Ser387–Pro398, Asn437–Ser450, and Ser462–Ile490. An important for interaction with histones region spans residues Gly523 to Lys629. Positions Trp591–Lys629 form a coiled coil.

The protein belongs to the SPT2 family. Interacts with histones. Interacts with a heterotetrameric complex formed by histone H3 and H4, especially when the histone tetramer is not bound to DNA.

The protein localises to the nucleus. It is found in the nucleolus. In terms of biological role, histone chaperone that stabilizes pre-existing histone tetramers and regulates replication-independent histone exchange on chromatin. Required for normal chromatin refolding in the coding region of transcribed genes, and for the suppression of spurious transcription. Binds DNA and histones and promotes nucleosome assembly (in vitro). Facilitates formation of tetrameric histone complexes containing histone H3 and H4. Modulates RNA polymerase 1-mediated transcription. Binds DNA, with a preference for branched DNA species, such as Y-form DNA and Holliday junction DNA. The polypeptide is Protein SPT2 homolog (spty2d1) (Danio rerio (Zebrafish)).